Reading from the N-terminus, the 84-residue chain is Small nuclear ribonucleoprotein E (84 aa).

Residues 13–84 (INFIFKLLQQ…GDNITLIQAI (72 aa)) form the Sm domain.

The protein belongs to the snRNP Sm proteins family. As to quaternary structure, component of the Sm core complex, present in spliceosomal snRNP U1, U2, U4/U6 and U5. The core complex contains smb1, smd1, smd2, smd3, sme1, smf1 and smg1 (Sm proteins B, D1, D2, D3, E, F and G, respectively), and is probably a heptameric ring structure.

The protein localises to the cytoplasm. Its subcellular location is the nucleus. Functionally, involved in pre-mRNA splicing. Binds and is required for the stability of snRNA U1, U2, U4 and U5 which contain a highly conserved structural motif called the Sm binding site. Involved in cap modification. This is Small nuclear ribonucleoprotein E from Schizosaccharomyces pombe (strain 972 / ATCC 24843) (Fission yeast).